A 53-amino-acid polypeptide reads, in one-letter code: uncharacterized protein (53 aa).

The span at Met1–Asn10 shows a compositional bias: polar residues. The segment at Met1 to Ser25 is disordered.

This is an uncharacterized protein from Saccharomyces cerevisiae (strain ATCC 204508 / S288c) (Baker's yeast).